Consider the following 83-residue polypeptide: Putative defensin-like protein 131 (83 aa).

Residues 1 to 34 (MAKNRVLTIFYCTIYYCICFKYVLLGMVVEKTQG) form the signal peptide. 4 disulfides stabilise this stretch: Cys37-Cys83, Cys46-Cys65, Cys51-Cys77, and Cys55-Cys79.

It belongs to the DEFL family.

Its subcellular location is the secreted. This Arabidopsis thaliana (Mouse-ear cress) protein is Putative defensin-like protein 131 (LCR29).